The primary structure comprises 155 residues: Endoribonuclease YbeY (155 aa).

Zn(2+) contacts are provided by His-117, His-121, and His-127.

Belongs to the endoribonuclease YbeY family. Requires Zn(2+) as cofactor.

Its subcellular location is the cytoplasm. Its function is as follows. Single strand-specific metallo-endoribonuclease involved in late-stage 70S ribosome quality control and in maturation of the 3' terminus of the 16S rRNA. This is Endoribonuclease YbeY from Dichelobacter nodosus (strain VCS1703A).